Here is a 122-residue protein sequence, read N- to C-terminus: Cytochrome c-556 (122 aa).

Positions 11, 111, 114, and 115 each coordinate heme. Heme c-binding residues include Met11, Cys111, Cys114, and His115.

In terms of assembly, monomer. In terms of processing, binds 1 heme c group covalently per subunit.

Functionally, low-spin monoheme cytochrome c. The protein is Cytochrome c-556 of Agrobacterium tumefaciens (strain B2A).